The chain runs to 60 residues: LKCKKLVPLFSKTCPPGKNLCYKMFMVATPKVPVKRGCIDVCPKSSLLVKYVCCNTDKCN.

Cystine bridges form between Cys-3/Cys-21, Cys-14/Cys-38, Cys-42/Cys-53, and Cys-54/Cys-59.

The protein belongs to the three-finger toxin family. Short-chain subfamily. Type IA cytotoxin sub-subfamily. As to quaternary structure, monomer in solution; Homodimer and oligomer in the presence of negatively charged lipids forming a pore with a size ranging between 20 and 30 Angstroms. In terms of tissue distribution, expressed by the venom gland.

The protein resides in the secreted. It is found in the target cell membrane. Its function is as follows. Shows cytolytic activity on many different cells by forming pore in lipid membranes. In vivo, increases heart rate or kills the animal by cardiac arrest. In addition, it binds to heparin with high affinity, interacts with Kv channel-interacting protein 1 (KCNIP1) in a calcium-independent manner, and binds to integrin alpha-V/beta-3 (ITGAV/ITGB3) with moderate affinity. The sequence is that of Cytotoxin SP15a from Naja atra (Chinese cobra).